A 317-amino-acid polypeptide reads, in one-letter code: Cytochrome c biogenesis protein CcsA (317 aa).

Transmembrane regions (helical) follow at residues 13-35 (ISFS…HEIV), 44-64 (GMIA…IYSG), 71-91 (LYES…VPYF), 143-163 (MLLS…LLVI), 171-191 (MIGF…IKYL), 225-245 (VIGL…VWAN), and 286-306 (AIVA…VNLL).

Belongs to the CcmF/CycK/Ccl1/NrfE/CcsA family. In terms of assembly, may interact with Ccs1.

The protein localises to the plastid. It localises to the chloroplast thylakoid membrane. Required during biogenesis of c-type cytochromes (cytochrome c6 and cytochrome f) at the step of heme attachment. The protein is Cytochrome c biogenesis protein CcsA of Illicium oligandrum (Star anise).